We begin with the raw amino-acid sequence, 100 residues long: Small ribosomal subunit protein uS14c (100 aa).

Belongs to the universal ribosomal protein uS14 family. Part of the 30S ribosomal subunit.

It localises to the plastid. Its subcellular location is the chloroplast. Binds 16S rRNA, required for the assembly of 30S particles. The chain is Small ribosomal subunit protein uS14c from Eucalyptus globulus subsp. globulus (Tasmanian blue gum).